Here is a 683-residue protein sequence, read N- to C-terminus: U4/U6 small nuclear ribonucleoprotein Prp3 (683 aa).

A PWI domain is found at 1–87 (MALSKRELDE…HSKSSSDRSR (87 aa)). The span at 73 to 107 (GRSSRHSKSSSDRSRKRELKEVFGDDSEISKESSG) shows a compositional bias: basic and acidic residues. The tract at residues 73-135 (GRSSRHSKSS…IPGPPSESPG (63 aa)) is disordered. A Glycyl lysine isopeptide (Lys-Gly) (interchain with G-Cter in SUMO2) cross-link involves residue Lys139. Positions 161 to 183 (SFISPPAPQPKTPSSSQPERLPI) are disordered. Ser164 bears the Phosphoserine mark. Glycyl lysine isopeptide (Lys-Gly) (interchain with G-Cter in SUMO2) cross-links involve residues Lys244 and Lys252. Residues 416-550 (NLVEHPAQLN…VHISVYRVRN (135 aa)) form a mediates interaction with SART3 region. Residue Ser619 is modified to Phosphoserine.

In terms of assembly, component of the precatalytic spliceosome (spliceosome B complex). Component of the U4/U6-U5 tri-snRNP complex, a building block of the precatalytic spliceosome (spliceosome B complex). The U4/U6-U5 tri-snRNP complex is composed of the U4, U6 and U5 snRNAs and at least PRPF3, PRPF4, PRPF6, PRPF8, PRPF31, SNRNP200, TXNL4A, SNRNP40, SNRPB, SNRPD1, SNRPD2, SNRPD3, SNRPE, SNRPF, SNRPG, DDX23, CD2BP2, PPIH, SNU13, EFTUD2, SART1 and USP39, plus LSM2, LSM3, LSM4, LSM5, LSM6, LSM7 and LSM8. Interacts directly with PRPF4. Part of a heteromeric complex containing PPIH, PRPF3 and PRPF4 that is stable in the absence of RNA. Interacts with SART3; the interaction is direct and recruits the deubiquitinase USP4 to PRPF3. Interacts with PRPF19. Interacts ('Lys-63'-linked polyubiquitinated) with PRPF8 (via the MPN (JAB/Mov34) domain); may stabilize the U4/U6-U5 tri-snRNP complex. Interacts with ERCC6. Ubiquitinated. Undergoes 'Lys-63'-linked polyubiquitination by PRPF19 and deubiquitination by USP4. 'Lys-63'-linked ubiquitination increases the affinity for PRPF8 and may regulate the assembly of the U4/U6-U5 tri-snRNP complex.

The protein resides in the nucleus. Its subcellular location is the nucleus speckle. Functionally, plays a role in pre-mRNA splicing as component of the U4/U6-U5 tri-snRNP complex that is involved in spliceosome assembly, and as component of the precatalytic spliceosome (spliceosome B complex). The chain is U4/U6 small nuclear ribonucleoprotein Prp3 (Prpf3) from Mus musculus (Mouse).